The chain runs to 453 residues: Allantoinase (453 aa).

Residues His59, His61, Lys146, His186, His242, and Asp315 each contribute to the Zn(2+) site. Lys146 is modified (N6-carboxylysine).

This sequence belongs to the metallo-dependent hydrolases superfamily. Allantoinase family. Homotetramer. The cofactor is Zn(2+). Carboxylation allows a single lysine to coordinate two zinc ions.

It carries out the reaction (S)-allantoin + H2O = allantoate + H(+). It participates in nitrogen metabolism; (S)-allantoin degradation; allantoate from (S)-allantoin: step 1/1. Catalyzes the conversion of allantoin (5-ureidohydantoin) to allantoic acid by hydrolytic cleavage of the five-member hydantoin ring. This is Allantoinase from Escherichia coli O139:H28 (strain E24377A / ETEC).